The following is a 587-amino-acid chain: Xyloglucan-specific endo-beta-1,4-glucanase BoGH9A (587 aa).

The first 19 residues, 1–19 (MKIVRYIALFGILSGLAVA), serve as a signal peptide directing secretion. Cys-20 carries the N-palmitoyl cysteine lipid modification. Cys-20 carries S-diacylglycerol cysteine lipidation. Catalysis depends on Asp-185, which acts as the Nucleophile. Active-site residues include His-511 and Asp-553. Residue Glu-562 is the Proton donor of the active site.

Belongs to the glycosyl hydrolase 9 (cellulase E) family.

The protein localises to the cell outer membrane. It catalyses the reaction xyloglucan + H2O = xyloglucan oligosaccharides.. The protein operates within glucan metabolism; xyloglucan degradation. In terms of biological role, catalyzes endohydrolysis of 1,4-beta-D-glucosidic linkages in xyloglucan with retention of the beta-configuration of the glycosyl residues in xyloglucan degradation. Cleaves the backbone of the 3 major types of natural xyloglucans (seed galactoxyloglucan from tamarind kernel, dicot fucogalactoxyloglucan from lettuce leaves, and solanaceous arabinogalactoxyloglucan from tomato fruit), to produce xyloglucan oligosaccharides. May be superfluous in xyloglucan degradation compared to BoGH5A (AC A7LXT7), the other Xyloglucan-specific endo-beta-1,4-glucanase. In Bacteroides ovatus (strain ATCC 8483 / DSM 1896 / JCM 5824 / BCRC 10623 / CCUG 4943 / NCTC 11153), this protein is Xyloglucan-specific endo-beta-1,4-glucanase BoGH9A.